The chain runs to 102 residues: Urease subunit beta (102 aa).

The protein belongs to the urease beta subunit family. As to quaternary structure, heterotrimer of UreA (gamma), UreB (beta) and UreC (alpha) subunits. Three heterotrimers associate to form the active enzyme.

Its subcellular location is the cytoplasm. The catalysed reaction is urea + 2 H2O + H(+) = hydrogencarbonate + 2 NH4(+). The protein operates within nitrogen metabolism; urea degradation; CO(2) and NH(3) from urea (urease route): step 1/1. The chain is Urease subunit beta from Acinetobacter baylyi (strain ATCC 33305 / BD413 / ADP1).